A 127-amino-acid polypeptide reads, in one-letter code: Small ribosomal subunit protein uS11 (127 aa).

The protein belongs to the universal ribosomal protein uS11 family. In terms of assembly, part of the 30S ribosomal subunit. Interacts with proteins S7 and S18. Binds to IF-3.

In terms of biological role, located on the platform of the 30S subunit, it bridges several disparate RNA helices of the 16S rRNA. Forms part of the Shine-Dalgarno cleft in the 70S ribosome. The chain is Small ribosomal subunit protein uS11 from Ruthia magnifica subsp. Calyptogena magnifica.